The primary structure comprises 206 residues: ATP-dependent Clp protease proteolytic subunit (206 aa).

Residue Ser107 is the Nucleophile of the active site. The active site involves His132.

The protein belongs to the peptidase S14 family. As to quaternary structure, fourteen ClpP subunits assemble into 2 heptameric rings which stack back to back to give a disk-like structure with a central cavity, resembling the structure of eukaryotic proteasomes.

The protein resides in the cytoplasm. It carries out the reaction Hydrolysis of proteins to small peptides in the presence of ATP and magnesium. alpha-casein is the usual test substrate. In the absence of ATP, only oligopeptides shorter than five residues are hydrolyzed (such as succinyl-Leu-Tyr-|-NHMec, and Leu-Tyr-Leu-|-Tyr-Trp, in which cleavage of the -Tyr-|-Leu- and -Tyr-|-Trp bonds also occurs).. Functionally, cleaves peptides in various proteins in a process that requires ATP hydrolysis. Has a chymotrypsin-like activity. Plays a major role in the degradation of misfolded proteins. The chain is ATP-dependent Clp protease proteolytic subunit from Idiomarina loihiensis (strain ATCC BAA-735 / DSM 15497 / L2-TR).